Here is a 210-residue protein sequence, read N- to C-terminus: Urease accessory protein UreE (210 aa).

Residues 136–210 (PEGGAYAEPS…HGHSHAHDHK (75 aa)) form a disordered region. Basic and acidic residues-rich tracts occupy residues 145–169 (SHAH…TSHD) and 178–196 (HDHD…EHCG). Residues 197 to 210 (HDHHHGHSHAHDHK) are compositionally biased toward basic residues.

This sequence belongs to the UreE family.

The protein localises to the cytoplasm. Functionally, involved in urease metallocenter assembly. Binds nickel. Probably functions as a nickel donor during metallocenter assembly. This is Urease accessory protein UreE from Bradyrhizobium sp. (strain ORS 278).